A 253-amino-acid polypeptide reads, in one-letter code: Vitamin B12 import ATP-binding protein BtuD (253 aa).

An ABC transporter domain is found at 3–237; it reads LDAKNLAMPP…EQLESTFATQ (235 aa). 31 to 38 contacts ATP; that stretch reads GPNGSGKS.

The protein belongs to the ABC transporter superfamily. Vitamin B12 importer (TC 3.A.1.13.1) family. As to quaternary structure, the complex is composed of two ATP-binding proteins (BtuD), two transmembrane proteins (BtuC) and a solute-binding protein (BtuF).

Its subcellular location is the cell inner membrane. It catalyses the reaction an R-cob(III)alamin(out) + ATP + H2O = an R-cob(III)alamin(in) + ADP + phosphate + H(+). Part of the ABC transporter complex BtuCDF involved in vitamin B12 import. Responsible for energy coupling to the transport system. In Photobacterium profundum (strain SS9), this protein is Vitamin B12 import ATP-binding protein BtuD.